The chain runs to 350 residues: 4-hydroxy-3-methylbut-2-enyl diphosphate reductase (350 aa).

A [4Fe-4S] cluster-binding site is contributed by Cys-36. The (2E)-4-hydroxy-3-methylbut-2-enyl diphosphate site is built by His-65 and His-101. Dimethylallyl diphosphate is bound by residues His-65 and His-101. Isopentenyl diphosphate is bound by residues His-65 and His-101. A [4Fe-4S] cluster-binding site is contributed by Cys-123. His-151 is a binding site for (2E)-4-hydroxy-3-methylbut-2-enyl diphosphate. His-151 serves as a coordination point for dimethylallyl diphosphate. His-151 serves as a coordination point for isopentenyl diphosphate. Residue Glu-153 is the Proton donor of the active site. Thr-192 is a (2E)-4-hydroxy-3-methylbut-2-enyl diphosphate binding site. Cys-222 serves as a coordination point for [4Fe-4S] cluster. Positions 250, 251, 252, and 295 each coordinate (2E)-4-hydroxy-3-methylbut-2-enyl diphosphate. Ser-250, Ser-251, Asn-252, and Ser-295 together coordinate dimethylallyl diphosphate. Residues Ser-250, Ser-251, Asn-252, and Ser-295 each coordinate isopentenyl diphosphate.

It belongs to the IspH family. Requires [4Fe-4S] cluster as cofactor.

The enzyme catalyses isopentenyl diphosphate + 2 oxidized [2Fe-2S]-[ferredoxin] + H2O = (2E)-4-hydroxy-3-methylbut-2-enyl diphosphate + 2 reduced [2Fe-2S]-[ferredoxin] + 2 H(+). The catalysed reaction is dimethylallyl diphosphate + 2 oxidized [2Fe-2S]-[ferredoxin] + H2O = (2E)-4-hydroxy-3-methylbut-2-enyl diphosphate + 2 reduced [2Fe-2S]-[ferredoxin] + 2 H(+). Its pathway is isoprenoid biosynthesis; dimethylallyl diphosphate biosynthesis; dimethylallyl diphosphate from (2E)-4-hydroxy-3-methylbutenyl diphosphate: step 1/1. It participates in isoprenoid biosynthesis; isopentenyl diphosphate biosynthesis via DXP pathway; isopentenyl diphosphate from 1-deoxy-D-xylulose 5-phosphate: step 6/6. In terms of biological role, catalyzes the conversion of 1-hydroxy-2-methyl-2-(E)-butenyl 4-diphosphate (HMBPP) into a mixture of isopentenyl diphosphate (IPP) and dimethylallyl diphosphate (DMAPP). Acts in the terminal step of the DOXP/MEP pathway for isoprenoid precursor biosynthesis. This chain is 4-hydroxy-3-methylbut-2-enyl diphosphate reductase, found in Rhizobium meliloti (strain 1021) (Ensifer meliloti).